Reading from the N-terminus, the 266-residue chain is UPF0354 protein lin1649 (266 aa).

It belongs to the UPF0354 family.

The sequence is that of UPF0354 protein lin1649 from Listeria innocua serovar 6a (strain ATCC BAA-680 / CLIP 11262).